The following is a 288-amino-acid chain: Programmed cell death protein 1 (288 aa).

The N-terminal stretch at Met-1–Phe-24 is a signal peptide. The nivolumab binding stretch occupies residues Leu-25–Pro-34. Topologically, residues Leu-25 to Val-170 are extracellular. Positions Pro-35–Thr-145 constitute an Ig-like V-type domain. 4 N-linked (GlcNAc...) asparagine glycosylation sites follow: Asn-49, Asn-58, Asn-74, and Asn-116. Cys-54 and Cys-123 form a disulfide bridge. An interaction with CD274/PDCD1L1 region spans residues Met-70–Asp-77. Positions Asn-74–Gln-99 are pembrolizumab binding. Residues Val-171–Ile-191 form a helical membrane-spanning segment. Over Cys-192–Leu-288 the chain is Cytoplasmic. The short motif at Val-221–Leu-226 is the ITIM motif element. Tyr-223 carries the phosphotyrosine modification. Lys-233 participates in a covalent cross-link: Glycyl lysine isopeptide (Lys-Gly) (interchain with G-Cter in ubiquitin). Thr-234 bears the Phosphothreonine; by MAPK3 mark. Residues Glu-247–Ile-251 carry the ITSM motif motif. Tyr-248 carries the post-translational modification Phosphotyrosine. The disordered stretch occupies residues Pro-254–Leu-288. Positions Arg-278 to Leu-288 are enriched in basic and acidic residues.

In terms of assembly, monomer. Interacts with CD274/PDCD1L1. Interacts with CD273/PDCD1LG2. Interacts with FBXO38; leading to ubiquitination and degradation of PDCD1 by the proteasome. Ubiquitinated at Lys-233 by the SCF(FBXO38) complex, leading to its proteasomal degradation. Ubiquitinated via 'Lys-48'-linked polyubiquitin chains. Deubiquitinated and thus stabilized by USP5. In terms of processing, tyrosine phosphorylated at Tyr-223 (within ITIM motif) and Tyr-248 (ITSM motif) upon ligand binding. Phosphorylation at Tyr-248 promotes the recruitment of the protein tyrosine phosphatase PTPN11/SHP-2 that mediates dephosphorylation of key TCR proximal signaling molecules, such as ZAP70, PRKCQ/PKCtheta and CD247/CD3zeta. Phosphorylation at Thr-234 promotes the recruitment of the deubiquitinase USP5. Post-translationally, N-glycosylation at Asn-58 contains at least two N-acetylglucosamine units and one fucose. N-glycosylation does not affect binding to nivolumab drug.

The protein resides in the cell membrane. Inhibited by pembrolizumab (also named MK-3475 or lambrolizumab), a monoclonal antibody that prevents the interaction with CD274/PDCD1L1. Inhibited by nivolumab (also named ONO-4538, BMS-936558 or Opdivo), a monoclonal antibody that prevents the interaction with CD274/PDCD1L1. The interaction with nivolumab is not dependent on glycosylation and depends on a loop at the N-terminus (N-terminal loop, corresponding to residues 25-34). Targeting the interaction between PDCD1 and CD274/PDCD1L1 with pembrolizumab and nivolumab antibodies has demonstrated great promise as a strategy for controlling and eradicating cancer. Pembrolizumab and nivolumab are used for treatment of patients with advanced melanoma. These antibodies are also effective against other cancers, such as non-small cell lung cancer, renal cell carcinoma, bladder cancer and Hodgkin's lymphoma. Inhibitory receptor on antigen activated T-cells that plays a critical role in induction and maintenance of immune tolerance to self. Delivers inhibitory signals upon binding to ligands CD274/PDCD1L1 and CD273/PDCD1LG2. Following T-cell receptor (TCR) engagement, PDCD1 associates with CD3-TCR in the immunological synapse and directly inhibits T-cell activation. Suppresses T-cell activation through the recruitment of PTPN11/SHP-2: following ligand-binding, PDCD1 is phosphorylated within the ITSM motif, leading to the recruitment of the protein tyrosine phosphatase PTPN11/SHP-2 that mediates dephosphorylation of key TCR proximal signaling molecules, such as ZAP70, PRKCQ/PKCtheta and CD247/CD3zeta. In terms of biological role, the PDCD1-mediated inhibitory pathway is exploited by tumors to attenuate anti-tumor immunity and escape destruction by the immune system, thereby facilitating tumor survival. The interaction with CD274/PDCD1L1 inhibits cytotoxic T lymphocytes (CTLs) effector function. The blockage of the PDCD1-mediated pathway results in the reversal of the exhausted T-cell phenotype and the normalization of the anti-tumor response, providing a rationale for cancer immunotherapy. This Homo sapiens (Human) protein is Programmed cell death protein 1.